We begin with the raw amino-acid sequence, 339 residues long: mRNA cap guanine-N(7) methyltransferase 2 (339 aa).

Positions 1 to 277 constitute an mRNA cap 0 methyltransferase domain; it reads MAVTPHHRLY…LYSTFVFQKP (277 aa). S-adenosyl-L-methionine contacts are provided by residues Lys-14, Asp-54, and 82-83; that span reads DP. Positions 314 to 339 are disordered; it reads VSRTDILPPADNEKGILGPGPADMRL.

It belongs to the class I-like SAM-binding methyltransferase superfamily. mRNA cap 0 methyltransferase family.

It localises to the nucleus. It carries out the reaction a 5'-end (5'-triphosphoguanosine)-ribonucleoside in mRNA + S-adenosyl-L-methionine = a 5'-end (N(7)-methyl 5'-triphosphoguanosine)-ribonucleoside in mRNA + S-adenosyl-L-homocysteine. Functionally, mRNA-capping methyltransferase that methylates the N7 position of the added guanosine to the 5'-cap structure of mRNAs. Binds RNA containing 5'-terminal GpppC. This is mRNA cap guanine-N(7) methyltransferase 2 from Oryza sativa subsp. japonica (Rice).